The sequence spans 223 residues: Large ribosomal subunit protein uL3 (223 aa).

Belongs to the universal ribosomal protein uL3 family. In terms of assembly, part of the 50S ribosomal subunit. Forms a cluster with proteins L14 and L19.

In terms of biological role, one of the primary rRNA binding proteins, it binds directly near the 3'-end of the 23S rRNA, where it nucleates assembly of the 50S subunit. In Nocardioides sp. (strain ATCC BAA-499 / JS614), this protein is Large ribosomal subunit protein uL3.